Reading from the N-terminus, the 295-residue chain is ATP synthase gamma chain (295 aa).

The protein belongs to the ATPase gamma chain family. In terms of assembly, F-type ATPases have 2 components, CF(1) - the catalytic core - and CF(0) - the membrane proton channel. CF(1) has five subunits: alpha(3), beta(3), gamma(1), delta(1), epsilon(1). CF(0) has three main subunits: a, b and c.

It is found in the cell inner membrane. Functionally, produces ATP from ADP in the presence of a proton gradient across the membrane. The gamma chain is believed to be important in regulating ATPase activity and the flow of protons through the CF(0) complex. The sequence is that of ATP synthase gamma chain from Campylobacter curvus (strain 525.92).